Consider the following 299-residue polypeptide: MHSLATAAPVPTALAQVDREKIYQWINELSSPETRENALLELSKKRESVPDLAPMLWHSFGTIAALLQEIVNIYPSINPPTLTAHQSNRVCNALALLQCVASHPETRSAFLAAHIPLFLYPFLHTVSKTRPFEYLRLTSLGVIGALVKTDEQEVINFLLTTEIIPLCLRIMESGSELSKTVATFILQKILLDDTGLAYICQTYERFSHVAMILGKMVLQLSKEPSARLLKHVVRCYLRLSDNPRAREALRQCLPDQLKDTTFAQVLKDDTTTKRWLAQLVKNLQEGQVTDPRGIPLPPQ.

Met1 is modified (N-acetylmethionine).

This sequence belongs to the CNOT9 family. As to quaternary structure, homodimer. Component of the CCR4-NOT complex; distinct complexes seem to exist that differ in the participation of probably mutually exclusive catalytic subunits. Interacts with MYB, ATF2, RARA, RARB, RARG, RXRA, RXRB and RXRG. Identified in a complex with ATF2 bound to target DNA. Interacts with NANOS2. Directly interacts with ZNF335.

The protein resides in the nucleus. Its subcellular location is the cytoplasm. It localises to the P-body. Component of the CCR4-NOT complex which is one of the major cellular mRNA deadenylases and is linked to various cellular processes including bulk mRNA degradation, miRNA-mediated repression, translational repression during translational initiation and general transcription regulation. Additional complex functions may be a consequence of its influence on mRNA expression. Involved in down-regulation of MYB- and JUN-dependent transcription. Enhances ligand-dependent transcriptional activity of nuclear hormone receptors. May play a role in cell differentiation. The protein is CCR4-NOT transcription complex subunit 9 of Bos taurus (Bovine).